Here is a 418-residue protein sequence, read N- to C-terminus: Enolase 1 (418 aa).

Gln-162 provides a ligand contact to (2R)-2-phosphoglycerate. Glu-204 (proton donor) is an active-site residue. Mg(2+) contacts are provided by Asp-241, Glu-285, and Asp-312. (2R)-2-phosphoglycerate contacts are provided by Lys-337, Arg-366, Ser-367, and Lys-388. The active-site Proton acceptor is the Lys-337.

This sequence belongs to the enolase family. Mg(2+) serves as cofactor.

The protein resides in the cytoplasm. The protein localises to the secreted. It localises to the cell surface. The catalysed reaction is (2R)-2-phosphoglycerate = phosphoenolpyruvate + H2O. It functions in the pathway carbohydrate degradation; glycolysis; pyruvate from D-glyceraldehyde 3-phosphate: step 4/5. In terms of biological role, catalyzes the reversible conversion of 2-phosphoglycerate (2-PG) into phosphoenolpyruvate (PEP). It is essential for the degradation of carbohydrates via glycolysis. This chain is Enolase 1, found in Lactococcus lactis subsp. cremoris (strain SK11).